The primary structure comprises 136 residues: Purkinje cell protein 2 homolog (136 aa).

Disordered stretches follow at residues 1-64 and 86-136; these read MMDQ…PEMD and SSLP…TQAP. In terms of domain architecture, GoLoco 1 spans 23–45; that stretch reads QEGFFNLLSHVQGDRMEGQRCSL. Positions 49 to 59 are enriched in polar residues; that stretch reads PGQTTKSQSDP. The 23-residue stretch at 63-85 folds into the GoLoco 2 domain; that stretch reads MDSLMDMLASTQGRRMDDQRVTV. A compositionally biased stretch (polar residues) spans 107–117; it reads LSPQPLLTPQD. Position 127 is a phosphoserine (Ser127).

Its function is as follows. May function as a cell-type specific modulator for G protein-mediated cell signaling. The chain is Purkinje cell protein 2 homolog (PCP2) from Homo sapiens (Human).